The following is a 670-amino-acid chain: DNA ligase (670 aa).

Residues 33-37 (DAEYD), 82-83 (SL), and Glu114 each bind NAD(+). The N6-AMP-lysine intermediate role is filled by Lys116. The NAD(+) site is built by Arg137, Glu173, Lys291, and Lys315. Cys409, Cys412, Cys427, and Cys433 together coordinate Zn(2+). Residues 592–670 (VQSDRLSGNT…ENALAELLSD (79 aa)) enclose the BRCT domain.

The protein belongs to the NAD-dependent DNA ligase family. LigA subfamily. It depends on Mg(2+) as a cofactor. Mn(2+) serves as cofactor.

The catalysed reaction is NAD(+) + (deoxyribonucleotide)n-3'-hydroxyl + 5'-phospho-(deoxyribonucleotide)m = (deoxyribonucleotide)n+m + AMP + beta-nicotinamide D-nucleotide.. Its function is as follows. DNA ligase that catalyzes the formation of phosphodiester linkages between 5'-phosphoryl and 3'-hydroxyl groups in double-stranded DNA using NAD as a coenzyme and as the energy source for the reaction. It is essential for DNA replication and repair of damaged DNA. The sequence is that of DNA ligase from Idiomarina loihiensis (strain ATCC BAA-735 / DSM 15497 / L2-TR).